We begin with the raw amino-acid sequence, 593 residues long: DNA primase (593 aa).

The CHC2-type zinc-finger motif lies at 38 to 62 (CPFHQEKTPSFTVSDSKRFFYCFGC). The Toprim domain occupies 250 to 332 (NRSILVEGYF…EKKISFIRLP (83 aa)). 3 residues coordinate Mg(2+): E256, D300, and D302.

This sequence belongs to the DnaG primase family. Monomer. Interacts with DnaB. The cofactor is Zn(2+). It depends on Mg(2+) as a cofactor.

It catalyses the reaction ssDNA + n NTP = ssDNA/pppN(pN)n-1 hybrid + (n-1) diphosphate.. Its function is as follows. RNA polymerase that catalyzes the synthesis of short RNA molecules used as primers for DNA polymerase during DNA replication. The polypeptide is DNA primase (Rickettsia typhi (strain ATCC VR-144 / Wilmington)).